Reading from the N-terminus, the 159-residue chain is ATP synthase subunit b' (159 aa).

The helical transmembrane segment at 27 to 47 (ATLPLMAVQFLILTVILNALL) threads the bilayer.

The protein belongs to the ATPase B chain family. In terms of assembly, F-type ATPases have 2 components, F(1) - the catalytic core - and F(0) - the membrane proton channel. F(1) has five subunits: alpha(3), beta(3), gamma(1), delta(1), epsilon(1). F(0) has four main subunits: a(1), b(1), b'(1) and c(10-14). The alpha and beta chains form an alternating ring which encloses part of the gamma chain. F(1) is attached to F(0) by a central stalk formed by the gamma and epsilon chains, while a peripheral stalk is formed by the delta, b and b' chains.

The protein resides in the cellular thylakoid membrane. F(1)F(0) ATP synthase produces ATP from ADP in the presence of a proton or sodium gradient. F-type ATPases consist of two structural domains, F(1) containing the extramembraneous catalytic core and F(0) containing the membrane proton channel, linked together by a central stalk and a peripheral stalk. During catalysis, ATP synthesis in the catalytic domain of F(1) is coupled via a rotary mechanism of the central stalk subunits to proton translocation. In terms of biological role, component of the F(0) channel, it forms part of the peripheral stalk, linking F(1) to F(0). The b'-subunit is a diverged and duplicated form of b found in plants and photosynthetic bacteria. The sequence is that of ATP synthase subunit b' from Synechococcus sp. (strain PCC 6716).